A 595-amino-acid polypeptide reads, in one-letter code: Chaperone protein HscA homolog (595 aa).

Belongs to the heat shock protein 70 family.

Functionally, chaperone involved in the maturation of iron-sulfur cluster-containing proteins. Has a low intrinsic ATPase activity which is markedly stimulated by HscB. The protein is Chaperone protein HscA homolog of Rickettsia akari (strain Hartford).